Here is a 302-residue protein sequence, read N- to C-terminus: Sulfotransferase 1C4 (302 aa).

55–60 (KAGTTW) is a 3'-phosphoadenylyl sulfate binding site. 113-115 (KTH) is a binding site for substrate. His-115 acts as the Proton acceptor in catalysis. Residues Arg-137, Ser-145, Tyr-200, 234–239 (TSFDVM), and 262–266 (FMRKG) each bind 3'-phosphoadenylyl sulfate.

It belongs to the sulfotransferase 1 family. Expressed at high levels in fetal lung and kidney and at low levels in fetal heart, adult kidney, ovary and spinal cord.

The protein localises to the cytoplasm. It is found in the cytosol. The enzyme catalyses a phenol + 3'-phosphoadenylyl sulfate = an aryl sulfate + adenosine 3',5'-bisphosphate + H(+). It carries out the reaction 17beta-estradiol + 3'-phosphoadenylyl sulfate = 17beta-estradiol 3-sulfate + adenosine 3',5'-bisphosphate + H(+). The catalysed reaction is bisphenol A + 3'-phosphoadenylyl sulfate = bisphenyl A sulfate + adenosine 3',5'-bisphosphate + H(+). Sulfotransferase that utilizes 3'-phospho-5'-adenylyl sulfate (PAPS) as sulfonate donor to catalyze the sulfate conjugation of phenolic compounds. Can also sulfonate estrogenic compounds, however, the dietary flavonoids (phytoestrogen) and environmental estrogens, like bisphenol A are better substrates than 17beta-estradiol (E2). Mediates the sulfation of doxorubicin and its analog epirubicin, two antitumor anthracyclines. The sequence is that of Sulfotransferase 1C4 from Homo sapiens (Human).